The primary structure comprises 317 residues: Acetyl-coenzyme A carboxylase carboxyl transferase subunit alpha (317 aa).

In terms of domain architecture, CoA carboxyltransferase C-terminal spans 39 to 293 (RLETKAREAL…GDAIADALSQ (255 aa)).

This sequence belongs to the AccA family. In terms of assembly, acetyl-CoA carboxylase is a heterohexamer composed of biotin carboxyl carrier protein (AccB), biotin carboxylase (AccC) and two subunits each of ACCase subunit alpha (AccA) and ACCase subunit beta (AccD).

It is found in the cytoplasm. It catalyses the reaction N(6)-carboxybiotinyl-L-lysyl-[protein] + acetyl-CoA = N(6)-biotinyl-L-lysyl-[protein] + malonyl-CoA. It functions in the pathway lipid metabolism; malonyl-CoA biosynthesis; malonyl-CoA from acetyl-CoA: step 1/1. Its function is as follows. Component of the acetyl coenzyme A carboxylase (ACC) complex. First, biotin carboxylase catalyzes the carboxylation of biotin on its carrier protein (BCCP) and then the CO(2) group is transferred by the carboxyltransferase to acetyl-CoA to form malonyl-CoA. The sequence is that of Acetyl-coenzyme A carboxylase carboxyl transferase subunit alpha from Xanthobacter autotrophicus (strain ATCC BAA-1158 / Py2).